Here is a 128-residue protein sequence, read N- to C-terminus: Otoraplin (128 aa).

The first 17 residues, M1–A17, serve as a signal peptide directing secretion. Disulfide bonds link C32–C37 and C55–C127. One can recognise an SH3 domain in the interval Y39 to V110.

It belongs to the MIA/OTOR family. In terms of tissue distribution, highly expressed in cochlea.

It is found in the secreted. The protein is Otoraplin (OTOR) of Homo sapiens (Human).